Consider the following 57-residue polypeptide: uncharacterized protein (57 aa).

This is an uncharacterized protein from Thermoproteus tenax virus 1 (strain KRA1) (TTV1).